Consider the following 313-residue polypeptide: GTP cyclohydrolase MptA (313 aa).

Belongs to the GTP cyclohydrolase IV family. As to quaternary structure, homodimer. Fe(2+) serves as cofactor.

The catalysed reaction is GTP + H2O = 7,8-dihydroneopterin 2',3'-cyclic phosphate + formate + diphosphate + H(+). It functions in the pathway cofactor biosynthesis; 5,6,7,8-tetrahydromethanopterin biosynthesis. Its function is as follows. Converts GTP to 7,8-dihydro-D-neopterin 2',3'-cyclic phosphate, the first intermediate in the biosynthesis of coenzyme methanopterin. This chain is GTP cyclohydrolase MptA, found in Methanosphaera stadtmanae (strain ATCC 43021 / DSM 3091 / JCM 11832 / MCB-3).